The chain runs to 250 residues: tRNA (guanine-N(1)-)-methyltransferase (250 aa).

S-adenosyl-L-methionine is bound by residues G116 and 136–141 (IGDYVL).

This sequence belongs to the RNA methyltransferase TrmD family. As to quaternary structure, homodimer.

Its subcellular location is the cytoplasm. The enzyme catalyses guanosine(37) in tRNA + S-adenosyl-L-methionine = N(1)-methylguanosine(37) in tRNA + S-adenosyl-L-homocysteine + H(+). Specifically methylates guanosine-37 in various tRNAs. This is tRNA (guanine-N(1)-)-methyltransferase from Pseudomonas syringae pv. tomato (strain ATCC BAA-871 / DC3000).